We begin with the raw amino-acid sequence, 173 residues long: Myosin light chain 5 (173 aa).

A disordered region spans residues 1-22; sequence MASRKTKKKEGGGLRAQRASSN. 3 EF-hand domains span residues 30–65, 100–135, and 136–171; these read TQIQEFKEAFTLMDQNRDGFIDKEDLKDTYASLGKT, DAEETILNAFKMLDPEGKGSINKDYIKRLLMSQADK, and MTAEEVDQMFQFATIDAAGNLDYKALSYVLTHGEEK. Positions 43, 45, 47, and 54 each coordinate Ca(2+).

In terms of assembly, myosin is a hexamer of 2 heavy chains and 4 light chains. In terms of tissue distribution, jaw-closing muscles.

In Felis catus (Cat), this protein is Myosin light chain 5 (MYL5).